The sequence spans 647 residues: DNA ligase (647 aa).

NAD(+) contacts are provided by residues 30 to 34 (DEEYD), 79 to 80 (SM), and glutamate 105. The active-site N6-AMP-lysine intermediate is lysine 107. NAD(+) contacts are provided by arginine 128, glutamate 162, and lysine 301. Zn(2+)-binding residues include cysteine 395, cysteine 398, cysteine 411, and cysteine 416. The BRCT domain maps to 570 to 647 (KSDSVIFGKT…ESAFNELVKE (78 aa)).

The protein belongs to the NAD-dependent DNA ligase family. LigA subfamily. Requires Mg(2+) as cofactor. Mn(2+) is required as a cofactor.

The catalysed reaction is NAD(+) + (deoxyribonucleotide)n-3'-hydroxyl + 5'-phospho-(deoxyribonucleotide)m = (deoxyribonucleotide)n+m + AMP + beta-nicotinamide D-nucleotide.. Its function is as follows. DNA ligase that catalyzes the formation of phosphodiester linkages between 5'-phosphoryl and 3'-hydroxyl groups in double-stranded DNA using NAD as a coenzyme and as the energy source for the reaction. It is essential for DNA replication and repair of damaged DNA. This chain is DNA ligase, found in Campylobacter jejuni subsp. doylei (strain ATCC BAA-1458 / RM4099 / 269.97).